A 556-amino-acid chain; its full sequence is Membrane protein insertase YidC (556 aa).

The next 5 membrane-spanning stretches (helical) occupy residues 6-26 (IVLY…WQID), 332-352 (LDLT…FSLM), 358-378 (VVGN…LAFY), 428-448 (LGGC…YWVL), and 501-521 (VMMF…SGLV).

Belongs to the OXA1/ALB3/YidC family. Type 1 subfamily. Interacts with the Sec translocase complex via SecD. Specifically interacts with transmembrane segments of nascent integral membrane proteins during membrane integration.

The protein localises to the cell inner membrane. Functionally, required for the insertion and/or proper folding and/or complex formation of integral membrane proteins into the membrane. Involved in integration of membrane proteins that insert both dependently and independently of the Sec translocase complex, as well as at least some lipoproteins. Aids folding of multispanning membrane proteins. This chain is Membrane protein insertase YidC, found in Legionella pneumophila (strain Lens).